Reading from the N-terminus, the 268-residue chain is Calpain small subunit 1 (268 aa).

Met1 is subject to N-acetylmethionine. Residue Ser6 is modified to Phosphoserine. One can recognise an EF-hand 1; atypical domain in the interval Glu96–Arg130. The Ca(2+) site is built by Ala109, Asp112, Glu114, Glu119, Asp137, Asp152, Asp154, Thr156, Lys158, and Glu163. EF-hand domains are found at residues Phe139–Lys172, Asn169–His204, Leu205–Leu233, and Val234–Ser268. Lys179 carries the N6-acetyllysine modification. Asp182, Asp184, Ser186, Thr188, Glu193, and Asp225 together coordinate Ca(2+).

Homodimer or heterodimer of a large (catalytic) and a small (regulatory) subunit. In presence of calcium, the heterodimer dissociates.

It is found in the cytoplasm. It localises to the cell membrane. In terms of biological role, regulatory subunit of the calcium-regulated non-lysosomal thiol-protease which catalyzes limited proteolysis of substrates involved in cytoskeletal remodeling and signal transduction. Essential for embryonic development. This chain is Calpain small subunit 1 (Capns1), found in Mus musculus (Mouse).